The following is a 126-amino-acid chain: Small ribosomal subunit protein uS13 (126 aa).

Residues 98 to 126 (PVRGQSTKNNARTRKGRKKTVANKKKATK) form a disordered region. Residues 108 to 126 (ARTRKGRKKTVANKKKATK) show a composition bias toward basic residues.

This sequence belongs to the universal ribosomal protein uS13 family. Part of the 30S ribosomal subunit. Forms a loose heterodimer with protein S19. Forms two bridges to the 50S subunit in the 70S ribosome.

Functionally, located at the top of the head of the 30S subunit, it contacts several helices of the 16S rRNA. In the 70S ribosome it contacts the 23S rRNA (bridge B1a) and protein L5 of the 50S subunit (bridge B1b), connecting the 2 subunits; these bridges are implicated in subunit movement. Contacts the tRNAs in the A and P-sites. In Bacteroides fragilis (strain ATCC 25285 / DSM 2151 / CCUG 4856 / JCM 11019 / LMG 10263 / NCTC 9343 / Onslow / VPI 2553 / EN-2), this protein is Small ribosomal subunit protein uS13.